A 646-amino-acid polypeptide reads, in one-letter code: NADP-dependent malic enzyme 4, chloroplastic (646 aa).

Residues 1 to 74 constitute a chloroplast transit peptide; the sequence is MISLTPSLFL…LETSAADIVP (74 aa). The Proton donor role is filled by tyrosine 194. NADP(+) is bound at residue arginine 247. The Proton acceptor role is filled by lysine 265. A divalent metal cation contacts are provided by glutamate 337, aspartate 338, and aspartate 361. NADP(+)-binding positions include aspartate 361, 390–406, and asparagine 502; that span reads LFLG…ELIA.

This sequence belongs to the malic enzymes family. Homodimer and homotetramer. The cofactor is Mg(2+). It depends on Mn(2+) as a cofactor. In terms of tissue distribution, expressed in leaves, stems, flowers and roots, mainly in vascular system. In roots, present in the stele, including the vascular tissue and the pericycle, mainly at emerging lateral roots and at root tips.

It localises to the plastid. It is found in the chloroplast. The enzyme catalyses (S)-malate + NADP(+) = pyruvate + CO2 + NADPH. It carries out the reaction oxaloacetate + H(+) = pyruvate + CO2. It functions in the pathway photosynthesis; C3 acid pathway. Its function is as follows. The chloroplastic ME isoform decarboxylates malate shuttled from neighboring mesophyll cells. The CO(2) released is then refixed by ribulose-bisphosphate carboxylase. This pathway eliminates the photorespiratory loss of CO(2) that occurs in most plants. The polypeptide is NADP-dependent malic enzyme 4, chloroplastic (NADP-ME4) (Arabidopsis thaliana (Mouse-ear cress)).